The sequence spans 258 residues: Phosphate import ATP-binding protein PstB 2 (258 aa).

One can recognise an ABC transporter domain in the interval 12–253 (IQVRDLNFYY…PRQKQTEDYI (242 aa)). 44-51 (GPSGCGKS) is an ATP binding site.

Belongs to the ABC transporter superfamily. Phosphate importer (TC 3.A.1.7) family. The complex is composed of two ATP-binding proteins (PstB), two transmembrane proteins (PstC and PstA) and a solute-binding protein (PstS).

It localises to the cell inner membrane. It carries out the reaction phosphate(out) + ATP + H2O = ADP + 2 phosphate(in) + H(+). Functionally, part of the ABC transporter complex PstSACB involved in phosphate import. Responsible for energy coupling to the transport system. This chain is Phosphate import ATP-binding protein PstB 2, found in Pectobacterium atrosepticum (strain SCRI 1043 / ATCC BAA-672) (Erwinia carotovora subsp. atroseptica).